A 22-amino-acid polypeptide reads, in one-letter code: Brevinin-1OKa (22 aa).

Lys22 carries the lysine amide modification.

In terms of tissue distribution, expressed by the skin glands.

Its subcellular location is the secreted. Functionally, antimicrobial peptide. Active against Gram-negative bacterium E.coli (MIC=12.5 uM) and against Gram-positive bacterium S.aureus (MIC=12.5 uM). This chain is Brevinin-1OKa, found in Nidirana okinavana (Kampira Falls frog).